Here is an 86-residue protein sequence, read N- to C-terminus: Small ribosomal subunit protein bS16 (86 aa).

This sequence belongs to the bacterial ribosomal protein bS16 family.

This Stenotrophomonas maltophilia (strain R551-3) protein is Small ribosomal subunit protein bS16.